The chain runs to 605 residues: Arginyl-tRNA--protein transferase 2 (605 aa).

Residues 496 to 513 (KVSSSSSSPQASETLLES) show a composition bias toward low complexity. Residues 496–549 (KVSSSSSSPQASETLLESTSEHEDMEQGDTNDDDDEMYNSDEDSDSDSSSSRNR) form a disordered region. Residues 518 to 541 (EDMEQGDTNDDDDEMYNSDEDSDS) are compositionally biased toward acidic residues.

The protein belongs to the R-transferase family.

The catalysed reaction is an N-terminal L-alpha-aminoacyl-[protein] + L-arginyl-tRNA(Arg) = an N-terminal L-arginyl-L-aminoacyl-[protein] + tRNA(Arg) + H(+). Involved in the post-translational conjugation of arginine to the N-terminal aspartate or glutamate of a protein. This arginylation is required for degradation of the protein via the ubiquitin pathway. Component of the N-end rule pathway with ATE1 and PRT6. The N-end rule pathway regulates seed after-ripening, seedling sugar sensitivity, seedling lipid breakdown, and abscisic acid (ABA) sensitivity of germination. The end-rule pathway regulates various aspects of leaf and shoot development. Involved in the oxygen-dependent N-arginylation of RAP2-12, an activator of hypoxic gene expression. This N-terminal modification leads to ubiquitination by PRT6 and subsequent degradation of RAP2-12 under aerobic conditions. Involved in disease resistance. The end-rule pathway plays a role in regulating the timing and amplitude of the immune response following infection with the bacterial pathogen Pseudomonas syringae pv tomato. Regulates the biosynthesis of plant-defense metabolites such as glucosinolates, and the biosynthesis and response to the phytohormone jasmonate (JA), which plays a key role in plant immunity. This chain is Arginyl-tRNA--protein transferase 2, found in Arabidopsis thaliana (Mouse-ear cress).